We begin with the raw amino-acid sequence, 443 residues long: Threonine/serine transporter TdcC (443 aa).

Helical transmembrane passes span 22-42, 44-64, 97-117, 140-160, 163-183, 207-227, 261-281, 311-331, 366-386, 389-409, and 423-443; these read TTWT…FFPI, AGFG…PIAF, GVVI…IYGV, FVAL…KDLM, VMSY…LSLI, ILIT…FSPI, MLMV…LSPA, FAIT…FKSF, LSMI…PNIL, IEAM…MYAI, and DNVF…YKLF.

Belongs to the amino acid/polyamine transporter 2 family. SdaC/TdcC subfamily.

It localises to the cell inner membrane. It carries out the reaction L-threonine(in) + H(+)(in) = L-threonine(out) + H(+)(out). The catalysed reaction is L-serine(in) + H(+)(in) = L-serine(out) + H(+)(out). Involved in the import of threonine and serine into the cell, with the concomitant import of a proton (symport system). The protein is Threonine/serine transporter TdcC of Shigella flexneri serotype 5b (strain 8401).